The following is a 277-amino-acid chain: UBX domain-containing protein 8 (277 aa).

Met1 is a topological domain (cytoplasmic). Residues 2–22 traverse the membrane as a helical segment; sequence ASRGVVGLFLLSALPLLCLEL. The Lumenal segment spans residues 23-33; sequence RRGIPSLGIKD. Residues 34-54 form a helical membrane-spanning segment; it reads LILLSGRIFLLLALLTLVISV. Over 55-277 the chain is Cytoplasmic; it reads TTSWFNSLKP…NVEEKEQSSQ (223 aa). The interval 64–89 is disordered; the sequence is PSQGHLKEGEKENEKRRRLVRERQQE. Residues 68–89 are compositionally biased toward basic and acidic residues; sequence HLKEGEKENEKRRRLVRERQQE. In terms of domain architecture, UBX spans 193 to 269; it reads TAEEVVTVAL…GITVDTVLNV (77 aa).

Interacts with SYVN1 and VCP. In terms of tissue distribution, highly expressed in gonads. In testis, expressed in post-meiotic round spermatids, while in ovaries it is expressed in granulosa cells.

Its subcellular location is the endoplasmic reticulum membrane. In terms of biological role, involved in endoplasmic reticulum-associated degradation (ERAD) for misfolded lumenal proteins, possibly by tethering VCP to the endoplasmic reticulum membrane. May play a role in reproduction. The sequence is that of UBX domain-containing protein 8 (Ubxn8) from Mus musculus (Mouse).